A 183-amino-acid polypeptide reads, in one-letter code: Photosystem I assembly protein Ycf3 (183 aa).

3 TPR repeats span residues 35 to 68 (AFIY…EIDS), 72 to 105 (SYIL…NSFL), and 120 to 153 (GEQA…SPDN).

The protein belongs to the Ycf3 family.

Its subcellular location is the plastid. The protein localises to the chloroplast thylakoid membrane. In terms of biological role, essential for the assembly of the photosystem I (PSI) complex. May act as a chaperone-like factor to guide the assembly of the PSI subunits. The polypeptide is Photosystem I assembly protein Ycf3 (Adiantum capillus-veneris (Maidenhair fern)).